A 502-amino-acid polypeptide reads, in one-letter code: Cytochrome P450 2J3 (502 aa).

Cys448 contributes to the heme binding site.

This sequence belongs to the cytochrome P450 family. It depends on heme as a cofactor. Abundantly expressed in heart and liver.

The protein localises to the endoplasmic reticulum membrane. It is found in the microsome membrane. It catalyses the reaction an organic molecule + reduced [NADPH--hemoprotein reductase] + O2 = an alcohol + oxidized [NADPH--hemoprotein reductase] + H2O + H(+). This enzyme metabolizes arachidonic acid predominantly via a NADPH-dependent olefin epoxidation mainly to 14,15-, 11,12-, and 8,9-epoxyeicosatrienoic acids (EET). It also acts as an omega-1-hydroxylase by metabolizing arachidonic acid to 19-hydroxyeicosatetraenoic acid (19-OH-AA). In Rattus norvegicus (Rat), this protein is Cytochrome P450 2J3 (Cyp2j3).